Consider the following 429-residue polypeptide: Histidinol dehydrogenase (429 aa).

Residues tyrosine 130, glutamine 191, and asparagine 214 each contribute to the NAD(+) site. Serine 237, glutamine 259, and histidine 262 together coordinate substrate. The Zn(2+) site is built by glutamine 259 and histidine 262. Active-site proton acceptor residues include glutamate 327 and histidine 328. Positions 328, 361, 415, and 420 each coordinate substrate. Residue aspartate 361 participates in Zn(2+) binding. Histidine 420 contacts Zn(2+).

Belongs to the histidinol dehydrogenase family. Requires Zn(2+) as cofactor.

It catalyses the reaction L-histidinol + 2 NAD(+) + H2O = L-histidine + 2 NADH + 3 H(+). Its pathway is amino-acid biosynthesis; L-histidine biosynthesis; L-histidine from 5-phospho-alpha-D-ribose 1-diphosphate: step 9/9. Catalyzes the sequential NAD-dependent oxidations of L-histidinol to L-histidinaldehyde and then to L-histidine. This is Histidinol dehydrogenase from Geobacter sulfurreducens (strain ATCC 51573 / DSM 12127 / PCA).